The sequence spans 433 residues: Glutamate-1-semialdehyde 2,1-aminomutase (433 aa).

K273 is subject to N6-(pyridoxal phosphate)lysine.

This sequence belongs to the class-III pyridoxal-phosphate-dependent aminotransferase family. HemL subfamily. Homodimer. Requires pyridoxal 5'-phosphate as cofactor.

The protein resides in the cytoplasm. The enzyme catalyses (S)-4-amino-5-oxopentanoate = 5-aminolevulinate. The protein operates within porphyrin-containing compound metabolism; protoporphyrin-IX biosynthesis; 5-aminolevulinate from L-glutamyl-tRNA(Glu): step 2/2. It functions in the pathway porphyrin-containing compound metabolism; chlorophyll biosynthesis. This is Glutamate-1-semialdehyde 2,1-aminomutase from Microcystis aeruginosa (strain NIES-843 / IAM M-2473).